The following is a 255-amino-acid chain: Acetylglutamate kinase (255 aa).

Substrate is bound by residues 40–41, Arg-62, and Asn-153; that span reads GG.

The protein belongs to the acetylglutamate kinase family. ArgB subfamily.

It localises to the cytoplasm. The catalysed reaction is N-acetyl-L-glutamate + ATP = N-acetyl-L-glutamyl 5-phosphate + ADP. It participates in amino-acid biosynthesis; L-arginine biosynthesis; N(2)-acetyl-L-ornithine from L-glutamate: step 2/4. Functionally, catalyzes the ATP-dependent phosphorylation of N-acetyl-L-glutamate. The protein is Acetylglutamate kinase of Bacillus cereus (strain ZK / E33L).